Consider the following 461-residue polypeptide: Phytase A (461 aa).

A disulfide bridge links C22 with C31. 1D-myo-inositol hexakisphosphate-binding residues include Q41, Y42, R71, H72, R75, and T78. 4 cysteine pairs are disulfide-bonded: C61/C405, C205/C456, C254/C272, and C427/C435. H72 (nucleophile) is an active-site residue. N95 and N110 each carry an N-linked (GlcNAc...) asparagine glycan. R155 serves as a coordination point for 1D-myo-inositol hexakisphosphate. N-linked (GlcNAc...) asparagine glycosylation is present at N197. Residue K291 coordinates 1D-myo-inositol hexakisphosphate. N-linked (GlcNAc...) asparagine glycans are attached at residues N329 and N343. 1D-myo-inositol hexakisphosphate is bound by residues H352 and D353. A glycan (N-linked (GlcNAc...) asparagine) is linked at N367.

The protein belongs to the histidine acid phosphatase family. Monomer. In terms of processing, glycosylated.

It is found in the secreted. The enzyme catalyses 1D-myo-inositol hexakisphosphate + H2O = 1D-myo-inositol 1,2,4,5,6-pentakisphosphate + phosphate. The catalysed reaction is 1D-myo-inositol 1,2,4,5,6-pentakisphosphate + H2O = 1D-myo-inositol 1,2,5,6-tetrakisphosphate + phosphate. It catalyses the reaction 1D-myo-inositol 1,2,5,6-tetrakisphosphate + H2O = 1D-myo-inositol 1,2,6-trisphosphate + phosphate. It carries out the reaction 1D-myo-inositol 1,2,6-trisphosphate + H2O = 1D-myo-inositol 1,2-bisphosphate + phosphate. The enzyme catalyses 1D-myo-inositol 1,2-bisphosphate + H2O = 1D-myo-inositol 2-phosphate + phosphate. In terms of biological role, catalyzes the phosphate monoester hydrolysis of phytic acid (myo-inositol hexakisphosphate), which results in the stepwise formation of myo-inositol pentakis-, tetrakis-, tris-, bis-, and monophosphates, as well as the liberation of inorganic phosphate. Myo-inositol 2-monophosphate is the end product. The chain is Phytase A from Penicillium oxalicum.